A 349-amino-acid polypeptide reads, in one-letter code: GMP reductase (349 aa).

NADP(+) is bound at residue 108-131; it reads IDFLKIKKIFLLSSELKYICIDVA. Positions 181 and 183 each coordinate K(+). C186 serves as the catalytic Thioimidate intermediate. Residue 216–239 coordinates NADP(+); the sequence is IISDGGCTVSGDIAKAFGGGADFV.

The protein belongs to the IMPDH/GMPR family. GuaC type 1 subfamily. In terms of assembly, homotetramer.

It carries out the reaction IMP + NH4(+) + NADP(+) = GMP + NADPH + 2 H(+). Its function is as follows. Catalyzes the irreversible NADPH-dependent deamination of GMP to IMP. It functions in the conversion of nucleobase, nucleoside and nucleotide derivatives of G to A nucleotides, and in maintaining the intracellular balance of A and G nucleotides. This is GMP reductase from Buchnera aphidicola subsp. Acyrthosiphon pisum (strain Tuc7).